A 157-amino-acid polypeptide reads, in one-letter code: ATP synthase subunit b' (157 aa).

Residues 22–42 (ATLPLIAIQFLLLVAVLNSLF) form a helical membrane-spanning segment.

It belongs to the ATPase B chain family. As to quaternary structure, F-type ATPases have 2 components, F(1) - the catalytic core - and F(0) - the membrane proton channel. F(1) has five subunits: alpha(3), beta(3), gamma(1), delta(1), epsilon(1). F(0) has four main subunits: a(1), b(1), b'(1) and c(10-14). The alpha and beta chains form an alternating ring which encloses part of the gamma chain. F(1) is attached to F(0) by a central stalk formed by the gamma and epsilon chains, while a peripheral stalk is formed by the delta, b and b' chains.

It is found in the cellular thylakoid membrane. In terms of biological role, f(1)F(0) ATP synthase produces ATP from ADP in the presence of a proton or sodium gradient. F-type ATPases consist of two structural domains, F(1) containing the extramembraneous catalytic core and F(0) containing the membrane proton channel, linked together by a central stalk and a peripheral stalk. During catalysis, ATP synthesis in the catalytic domain of F(1) is coupled via a rotary mechanism of the central stalk subunits to proton translocation. Its function is as follows. Component of the F(0) channel, it forms part of the peripheral stalk, linking F(1) to F(0). The b'-subunit is a diverged and duplicated form of b found in plants and photosynthetic bacteria. The sequence is that of ATP synthase subunit b' from Synechococcus sp. (strain JA-2-3B'a(2-13)) (Cyanobacteria bacterium Yellowstone B-Prime).